Here is a 221-residue protein sequence, read N- to C-terminus: NEDD4 family-interacting protein 1 (221 aa).

Residue Ala2 is modified to N-acetylalanine. The interval 2–41 (ALALAALAAVEPACGSRYQQLQNEEESGEPEQAAGDAPPP) is interaction with UBE2L3. At 2–116 (ALALAALAAV…ADQLRIGNDG (115 aa)) the chain is on the cytoplasmic side. Residues 18–45 (RYQQLQNEEESGEPEQAAGDAPPPYSSI) are disordered. Short sequence motifs (PPxY motif) lie at residues 39 to 42 (PPPY), 64 to 67 (PPSY), and 74 to 76 (PSY). An interaction with ITCH region spans residues 42–76 (YSSISAESAAYFDYKDESGFPKPPSYNVATTLPSY). Residues 117–137 (IFMLTFFMAFLFNWIGFFLSF) traverse the membrane as a helical segment. Residues 138-143 (CLTTSA) are Extracellular-facing. A helical transmembrane segment spans residues 144-164 (AGRYGAISGFGLSLIKWILIV). The Cytoplasmic segment spans residues 165–172 (RFSTYFPG). The chain crosses the membrane as a helical span at residues 173–193 (YFDGQYWLWWVFLVLGFLLFL). At 194–221 (RGFINYAKVRKMPETFSNLPRTRVLFIY) the chain is on the extracellular side.

Forms heterodimers with NDFIP2. Interacts with several E3 ubiquitin-protein ligases, including ITCH, NEDD4, NEDD4L and WWP2. The interaction with NEDD4, NEDD4L and ITCH leads to relocalization of these proteins to exosomes and eventually to exosomal secretion. Interacts with U2SURP. Interacts with SLC11A2/DMT1. Interacts with PTEN. May interact with phosphorylated EGFR. Interacts with BRAT1. Interacts with KCNH2. Interacts with MAVS. Part of a complex containing ITCH, NDFIP1 and MAP3K7. Interacts (via N-terminus) with UBE2L3; the interaction mediates recruitment of UBE2L3 to ITCH. In terms of processing, ubiquitinated by NEDD4 and ITCH; mono-, di- and polyubiquitinated forms are detected. Ubiquitination regulates its degradation. Post-translationally, undergoes transient tyrosine phosphorylation following EGF stimulation, most probably by catalyzed by SRC. Phosphorylation SRC is enhanced in the presence of NDFIP2 which may act as a scaffold to recruit SRC to NDFIP1. As to expression, widely expressed. Higher levels are detected in cerebellum, pituitary, thalamus, kidney, liver, testis, salivary glands and placenta. Also expressed in fetal brain, kidney and lung.

It is found in the endosome membrane. The protein resides in the golgi apparatus membrane. Its subcellular location is the synapse. The protein localises to the synaptosome. It localises to the cell projection. It is found in the dendrite. The protein resides in the secreted. In terms of biological role, activates HECT domain-containing E3 ubiquitin-protein ligases, including NEDD4 and ITCH, and consequently modulates the stability of their targets. As a result, controls many cellular processes. Prevents chronic T-helper cell-mediated inflammation by activating ITCH and thus controlling JUNB degradation. Promotes pancreatic beta cell death through degradation of JUNB and inhibition of the unfolded protein response, leading to reduction of insulin secretion. Restricts the production of pro-inflammatory cytokines in effector Th17 T-cells by promoting ITCH-mediated ubiquitination and degradation of RORC. Together with NDFIP2, limits the cytokine signaling and expansion of effector Th2 T-cells by promoting degradation of JAK1, probably by ITCH- and NEDD4L-mediated ubiquitination. Regulates peripheral T-cell tolerance to self and foreign antigens, forcing the exit of naive CD4+ T-cells from the cell cycle before they become effector T-cells. Negatively regulates RLR-mediated antiviral response by promoting SMURF1-mediated ubiquitination and subsequent degradation of MAVS. Negatively regulates KCNH2 potassium channel activity by decreasing its cell-surface expression and interfering with channel maturation through recruitment of NEDD4L to the Golgi apparatus where it mediates KCNH2 degradation. In cortical neurons, mediates the ubiquitination of the divalent metal transporter SLC11A2/DMT1 by NEDD4L, leading to its down-regulation and protection of the cells from cobalt and iron toxicity. Important for normal development of dendrites and dendritic spines in cortex. Enhances the ubiquitination of BRAT1 mediated by: NEDD4, NEDD4L and ITCH and is required for the nuclear localization of ubiquitinated BRAT1. Enhances the ITCH-mediated ubiquitination of MAP3K7 by recruiting E2 ubiquitin-conjugating enzyme UBE2L3 to ITCH. Modulates EGFR signaling through multiple pathways. In particular, may regulate the ratio of AKT1-to-MAPK8 signaling in response to EGF, acting on AKT1 probably through PTEN destabilization and on MAPK8 through ITCH-dependent MAP2K4 inactivation. As a result, may control cell growth rate. Inhibits cell proliferation by promoting PTEN nuclear localization and changing its signaling specificity. The sequence is that of NEDD4 family-interacting protein 1 (NDFIP1) from Homo sapiens (Human).